A 353-amino-acid polypeptide reads, in one-letter code: 2-Hydroxyacid oxidase 2 (353 aa).

Positions 2–353 (PLVCLTDFRE…NQDLIQFSRL (352 aa)) constitute an FMN hydroxy acid dehydrogenase domain. FMN contacts are provided by residues 77–79 (PTG), serine 106, and glutamine 128. Residue tyrosine 130 participates in a 2-oxocarboxylate binding. Threonine 156 serves as a coordination point for FMN. Arginine 165 contacts a 2-oxocarboxylate. Lysine 224 provides a ligand contact to FMN. The active-site Proton acceptor is the histidine 248. Arginine 251 provides a ligand contact to a 2-oxocarboxylate. Residues 279-283 (DGGIR) and 302-303 (GR) contribute to the FMN site. Residues 351–353 (SRL) carry the Microbody targeting signal motif.

It belongs to the FMN-dependent alpha-hydroxy acid dehydrogenase family. As to quaternary structure, homotetramer. The cofactor is FMN.

It localises to the peroxisome. It catalyses the reaction a (2S)-2-hydroxycarboxylate + O2 = a 2-oxocarboxylate + H2O2. The catalysed reaction is 2-hydroxyhexadecanoate + O2 = 2-oxohexadecanoate + H2O2. It carries out the reaction 2-hydroxyoctanoate + O2 = 2-oxooctanoate + H2O2. It participates in lipid metabolism; fatty acid metabolism. Oxidase that catalyzes the oxidation of medium and long chain hydroxyacids such as 2-hydroxyhexadecanoate and 2-hydroxyoctanoate, to the correspondong 2-oxoacids. Its role in the oxidation of 2-hydroxy fatty acids may contribute to the general pathway of fatty acid alpha-oxidation. Active in vitro with the artificial electron acceptor 2,6-dichlorophenolindophenol (DCIP), but O2 is believed to be the physiological electron acceptor, leading to the production of H2O2. In Bos taurus (Bovine), this protein is 2-Hydroxyacid oxidase 2 (HAO2).